Here is a 181-residue protein sequence, read N- to C-terminus: RNA pyrophosphohydrolase (181 aa).

Residues 6 to 148 (GFRPNVGIIV…KRQVYRQALQ (143 aa)) enclose the Nudix hydrolase domain. Residues 38-59 (GGVEANETPLEALYRELREEVG) carry the Nudix box motif.

The protein belongs to the Nudix hydrolase family. RppH subfamily. The cofactor is a divalent metal cation.

Functionally, accelerates the degradation of transcripts by removing pyrophosphate from the 5'-end of triphosphorylated RNA, leading to a more labile monophosphorylated state that can stimulate subsequent ribonuclease cleavage. The chain is RNA pyrophosphohydrolase from Halorhodospira halophila (strain DSM 244 / SL1) (Ectothiorhodospira halophila (strain DSM 244 / SL1)).